We begin with the raw amino-acid sequence, 104 residues long: Large ribosomal subunit protein bL21c (104 aa).

The protein belongs to the bacterial ribosomal protein bL21 family. In terms of assembly, part of the 50S ribosomal subunit.

The protein resides in the plastid. The protein localises to the chloroplast. This protein binds to 23S rRNA. The sequence is that of Large ribosomal subunit protein bL21c from Porphyra purpurea (Red seaweed).